Reading from the N-terminus, the 249-residue chain is DNA polymerase sliding clamp (249 aa).

This sequence belongs to the PCNA family. Homotrimer. The subunits circularize to form a toroid; DNA passes through its center. Replication factor C (RFC) is required to load the toroid on the DNA.

Its function is as follows. Sliding clamp subunit that acts as a moving platform for DNA processing. Responsible for tethering the catalytic subunit of DNA polymerase and other proteins to DNA during high-speed replication. This Methanococcus vannielii (strain ATCC 35089 / DSM 1224 / JCM 13029 / OCM 148 / SB) protein is DNA polymerase sliding clamp.